A 95-amino-acid polypeptide reads, in one-letter code: Large ribosomal subunit protein uL23 (95 aa).

This sequence belongs to the universal ribosomal protein uL23 family. Part of the 50S ribosomal subunit. Contacts protein L29, and trigger factor when it is bound to the ribosome.

In terms of biological role, one of the early assembly proteins it binds 23S rRNA. One of the proteins that surrounds the polypeptide exit tunnel on the outside of the ribosome. Forms the main docking site for trigger factor binding to the ribosome. The protein is Large ribosomal subunit protein uL23 of Geobacillus thermodenitrificans (strain NG80-2).